Consider the following 416-residue polypeptide: Multifunctional CCA protein (416 aa).

ATP-binding residues include Gly8 and Arg11. Residues Gly8 and Arg11 each coordinate CTP. Mg(2+) is bound by residues Asp21 and Asp23. The ATP site is built by Arg91, Arg137, and Arg140. Arg91, Arg137, and Arg140 together coordinate CTP. Positions 226-327 constitute an HD domain; that stretch reads TGVHIMLVID…VNLLERCDAF (102 aa).

This sequence belongs to the tRNA nucleotidyltransferase/poly(A) polymerase family. Bacterial CCA-adding enzyme type 1 subfamily. Monomer. Can also form homodimers and oligomers. Requires Mg(2+) as cofactor. It depends on Ni(2+) as a cofactor.

It carries out the reaction a tRNA precursor + 2 CTP + ATP = a tRNA with a 3' CCA end + 3 diphosphate. The enzyme catalyses a tRNA with a 3' CCA end + 2 CTP + ATP = a tRNA with a 3' CCACCA end + 3 diphosphate. Functionally, catalyzes the addition and repair of the essential 3'-terminal CCA sequence in tRNAs without using a nucleic acid template. Adds these three nucleotides in the order of C, C, and A to the tRNA nucleotide-73, using CTP and ATP as substrates and producing inorganic pyrophosphate. tRNA 3'-terminal CCA addition is required both for tRNA processing and repair. Also involved in tRNA surveillance by mediating tandem CCA addition to generate a CCACCA at the 3' terminus of unstable tRNAs. While stable tRNAs receive only 3'-terminal CCA, unstable tRNAs are marked with CCACCA and rapidly degraded. In Janthinobacterium sp. (strain Marseille) (Minibacterium massiliensis), this protein is Multifunctional CCA protein.